A 77-amino-acid polypeptide reads, in one-letter code: Dermatoxin-DA1 (77 aa).

The first 22 residues, Met-1 to Cys-22, serve as a signal peptide directing secretion. A propeptide spanning residues Glu-23–Glu-42 is cleaved from the precursor. Lys-76 is subject to Lysine amide.

This sequence belongs to the frog skin active peptide (FSAP) family. Dermatoxin subfamily. Expressed by the skin glands.

It localises to the secreted. Its function is as follows. Possesses a potent antimicrobial activity against Gram-positive and Gram-negative bacteria. Probably acts by disturbing membrane functions with its amphipathic structure. The chain is Dermatoxin-DA1 from Agalychnis dacnicolor (Giant Mexican leaf frog).